The primary structure comprises 528 residues: 4-nitrophenol 4-monooxygenase/4-nitrocatechol 2-monooxygenase, oxygenase component (528 aa).

100–104 (RPPAG) contributes to the substrate binding site. FAD-binding positions include 153 to 155 (PMF), 159 to 162 (QFDR), and Thr194. 205 to 206 (GN) contributes to the substrate binding site. 461–464 (TMQR) contacts FAD.

Belongs to the FADH(2)-utilizing monooxygenase family. In terms of assembly, the 4-NP/4-NCA monooxygenase is composed of an oxygenase component NpcA and a reductase component NpcB. FAD serves as cofactor.

It carries out the reaction 4-nitrophenol + NADH + O2 + H(+) = 4-nitrocatechol + NAD(+) + H2O. The enzyme catalyses 4-nitrocatechol + NADPH + O2 = 2-hydroxy-1,4-benzoquinone + nitrite + NADP(+) + H2O. It catalyses the reaction 4-nitrocatechol + NADH + O2 = 2-hydroxy-1,4-benzoquinone + nitrite + NAD(+) + H2O. Its pathway is aromatic compound metabolism. It functions in the pathway xenobiotic degradation. Its activity is regulated as follows. Inhibited by methimazole. Its function is as follows. Involved in the degradation of para-nitrophenol (4-NP). Catalyzes both the initial hydroxylation of 4-NP to produce 4-nitrocatechol (4-NCA) and the subsequent oxidative release of the nitro group from 4-NCA to produce 2-hydroxy-1,4-benzoquinone. It can also use 4-nitroresorcinol as substrate with a rate of nitrite release similar to that observed with the two physiological substrates, 4-PN and 4-NCA. The chain is 4-nitrophenol 4-monooxygenase/4-nitrocatechol 2-monooxygenase, oxygenase component (npcA) from Rhodococcus opacus (Nocardia opaca).